The chain runs to 505 residues: RNA-splicing ligase RtcB homolog (505 aa).

Asp-119, Cys-122, His-227, His-259, and His-353 together coordinate Mn(2+). 226-230 (NHYAE) serves as a coordination point for GMP. Residues 353–354 (HN), 402–405 (GGTM), Ser-409, 428–431 (HGAG), and Lys-504 contribute to the GMP site. His-428 (GMP-histidine intermediate) is an active-site residue.

The protein belongs to the RtcB family. As to quaternary structure, catalytic component of the tRNA-splicing ligase complex. Requires Mn(2+) as cofactor.

The protein localises to the nucleus. It localises to the cytoplasm. The enzyme catalyses a 3'-end 3'-phospho-ribonucleotide-RNA + a 5'-end dephospho-ribonucleoside-RNA + GTP = a ribonucleotidyl-ribonucleotide-RNA + GMP + diphosphate. It carries out the reaction a 3'-end 2',3'-cyclophospho-ribonucleotide-RNA + a 5'-end dephospho-ribonucleoside-RNA + GTP + H2O = a ribonucleotidyl-ribonucleotide-RNA + GMP + diphosphate + H(+). Catalytic subunit of the tRNA-splicing ligase complex that acts by directly joining spliced tRNA halves to mature-sized tRNAs by incorporating the precursor-derived splice junction phosphate into the mature tRNA as a canonical 3',5'-phosphodiester. May act as an RNA ligase with broad substrate specificity, and may function toward other RNAs. This Danio rerio (Zebrafish) protein is RNA-splicing ligase RtcB homolog.